The sequence spans 503 residues: MSKPFLSLLSLSLLLFASACLATSSEFDRLNQCQLDSINALEPDHRVESEAGLTETWNPNHPELKCAGVSLIRRTIDPNGLHLPSFSPSPQLIFIIQGKGVLGLSFPGCPETYEEPRSSQSRQESRQQQGDSHQKVRRFRKGDIIAIPSGIPYWTYNHGDEPLVAISLLDTSNIANQLDSTPRVFYLGGNPETEFPETQEEQQGRHRQKHSYPVGRRSGHHQQEEESEEQNEGNSVLSGFSSEFLAQTFNTEEDTAKRLRSPRDERSQIVRVEGGLRIIKPKGKEEEEKEQSHSHSHREEKEEEEEEEEDEEEKQRSEERKNGLEETICSAKIRENIADAARADLYNPRAGRISTANSLTLPVLRYLRLSAEYVRLYRNGIYAPHWNINANSLLYVIRGEGRVRIVNCQGNTVFDNKVRKGQLVVVPQNFVVAEQAGEEEGLEYVVFKTNDRAAVSHVQQVFRATPSEVLANAFGLRQRQVTELKLSGNRGPLVHPRSQSQSH.

The first 22 residues, 1 to 22 (MSKPFLSLLSLSLLLFASACLA), serve as a signal peptide directing secretion. Disulfide bonds link cysteine 33-cysteine 66 and cysteine 109-cysteine 329. The region spanning 38 to 257 (INALEPDHRV…TFNTEEDTAK (220 aa)) is the Cupin type-1 1 domain. Disordered stretches follow at residues 111-140 (ETYE…RRFR), 185-235 (FYLG…EGNS), and 253-323 (EDTA…RKNG). Positions 118–129 (SSQSRQESRQQQ) are enriched in low complexity. Composition is skewed to basic and acidic residues over residues 254–268 (DTAK…ERSQ) and 282–300 (KGKE…HREE). A compositionally biased stretch (acidic residues) spans 301–312 (KEEEEEEEEDEE). Basic and acidic residues predominate over residues 313-323 (EKQRSEERKNG). Residues 335 to 482 (ENIADAARAD…AFGLRQRQVT (148 aa)) form the Cupin type-1 2 domain.

Belongs to the 11S seed storage protein (globulins) family. Hexamer; each subunit is composed of an acidic and a basic chain derived from a single precursor and linked by a disulfide bond.

Its function is as follows. This protein found in the seeds of many leguminous and non-leguminous plants is the source of sulfur-containing amino acids in seed meals. This is Legumin J (LEGJ) from Pisum sativum (Garden pea).